The sequence spans 556 residues: Guanine nucleotide-binding protein-like 3 homolog (556 aa).

Residues asparagine 29–serine 50 form a disordered region. A coiled-coil region spans residues lysine 58–leucine 95. Residues alanine 138–valine 317 form the CP-type G domain. GTP-binding positions include asparagine 184–aspartate 187, glycine 266–serine 273, and aspartate 310–glycine 313. Disordered regions lie at residues alanine 461–leucine 508 and lysine 525–methionine 556. A compositionally biased stretch (acidic residues) spans aspartate 466 to aspartate 478. Positions lysine 525 to alanine 535 are enriched in basic residues.

The protein belongs to the TRAFAC class YlqF/YawG GTPase family.

It localises to the nucleus. Its function is as follows. May play a role in regulating cellular proliferation in both germline and somatic tissues. This chain is Guanine nucleotide-binding protein-like 3 homolog, found in Caenorhabditis elegans.